The chain runs to 376 residues: uncharacterized protein (376 aa).

Belongs to the YCR102c/YLR460c/YNL134c family.

This is an uncharacterized protein from Saccharomyces cerevisiae (strain ATCC 204508 / S288c) (Baker's yeast).